Here is a 352-residue protein sequence, read N- to C-terminus: MDYQVSSPTYDIDYYTSEPCQKIKVKQIAARLLPPLYSLVFIFGFVGNILVVLILINCKRLKSMTDIYLLNLAISDLLFLLTVPFWAHYAAAQWDFGNTMCQLLTGLYFIGFFSGIFFIILLTIDRYLAIVHAVFALKARTVTFGVVTSVITWVVAVFASLPRIIFTRSQREGLHYTCSSHFPYSQYQFWKNFQTLKIVILGLVLPLLVMVICYSGILKTLLRCRNDKKRHRAVRLIFTIMIVYFLFWAPYNIVLLLNTFQEFFGLNNCSSSNRLDQAMQVTETLGMTHCCINPIIYAFVGEKFRNYLLVFFQKHIAKRFCKCCSIFQQDAPERASSVYTRSTGEQETSVGL.

Residues 1-30 (MDYQVSSPTYDIDYYTSEPCQKIKVKQIAA) lie on the Extracellular side of the membrane. Sulfotyrosine is present on Y3. 2 O-linked (GalNAc...) serine glycosylation sites follow: S6 and S7. 3 positions are modified to sulfotyrosine: Y10, Y14, and Y15. 2 disulfides stabilise this stretch: C20–C269 and C101–C178. The chain crosses the membrane as a helical span at residues 31-58 (RLLPPLYSLVFIFGFVGNILVVLILINC). The Cytoplasmic portion of the chain corresponds to 59 to 68 (KRLKSMTDIY). The chain crosses the membrane as a helical span at residues 69–89 (LLNLAISDLLFLLTVPFWAHY). Topologically, residues 90 to 102 (AAAQWDFGNTMCQ) are extracellular. A helical membrane pass occupies residues 103-124 (LLTGLYFIGFFSGIFFIILLTI). Over 125 to 141 (DRYLAIVHAVFALKART) the chain is Cytoplasmic. The chain crosses the membrane as a helical span at residues 142-166 (VTFGVVTSVITWVVAVFASLPRIIF). Topologically, residues 167–198 (TRSQREGLHYTCSSHFPYSQYQFWKNFQTLKI) are extracellular. A helical membrane pass occupies residues 199–218 (VILGLVLPLLVMVICYSGIL). At 219–235 (KTLLRCRNDKKRHRAVR) the chain is on the cytoplasmic side. Residues 236-260 (LIFTIMIVYFLFWAPYNIVLLLNTF) traverse the membrane as a helical segment. Over 261-277 (QEFFGLNNCSSSNRLDQ) the chain is Extracellular. A helical transmembrane segment spans residues 278-301 (AMQVTETLGMTHCCINPIIYAFVG). Residues 302-352 (EKFRNYLLVFFQKHIAKRFCKCCSIFQQDAPERASSVYTRSTGEQETSVGL) lie on the Cytoplasmic side of the membrane. Residues C321, C323, and C324 are each lipidated (S-palmitoyl cysteine). Phosphoserine; by BARK1 is present on residues S336, S337, S342, and S349.

It belongs to the G-protein coupled receptor 1 family. In terms of assembly, interacts with PRAF2. Efficient ligand binding to CCL3/MIP-1alpha and CCL4/MIP-1beta requires sulfation, O-glycosylation and sialic acid modifications. Glycosylation on Ser-6 is required for efficient binding of CCL4. Interacts with GRK2. Interacts with ARRB1 and ARRB2. Interacts with CNIH4. Interacts with S100A4; this interaction stimulates T-lymphocyte chemotaxis. Post-translationally, sulfated on at least 2 of the N-terminal tyrosines. Sulfation is required for efficient binding of the chemokines, CCL3 and CCL4. In terms of processing, palmitoylation in the C-terminal is important for cell surface expression. Phosphorylation on serine residues in the C-terminal is stimulated by binding CC chemokines especially by APO-RANTES. Post-translationally, O-glycosylated, but not N-glycosylated. Ser-6 appears to be the major site even if Ser-7 may be also O-glycosylated. Also sialylated glycans present which contribute to chemokine binding. Thr-16 and Ser-17 may also be glycosylated and, if so, with small moieties such as a T-antigen.

Its subcellular location is the cell membrane. Functionally, receptor for a number of inflammatory CC-chemokines including CCL3/MIP-1-alpha, CCL4/MIP-1-beta and RANTES and subsequently transduces a signal by increasing the intracellular calcium ion level. May play a role in the control of granulocytic lineage proliferation or differentiation. Participates in T-lymphocyte migration to the infection site by acting as a chemotactic receptor. In Chlorocebus sabaeus (Green monkey), this protein is C-C chemokine receptor type 5 (CCR5).